A 422-amino-acid polypeptide reads, in one-letter code: Receptor homology region, transmembrane domain- and RING domain-containing protein 3 (422 aa).

The signal sequence occupies residues 1-22 (MNLVVLLILTLLLFIVSYVVDA). At 23–168 (GQVILVDSNI…NTEDSVWSLY (146 aa)) the chain is on the lumenal side. An N-linked (GlcNAc...) asparagine glycan is attached at Asn31. The cysteines at positions 64 and 89 are disulfide-linked. The PA domain occupies 81–146 (LVLIIRGGCS…RAGEMLKKYA (66 aa)). Residues 169 to 189 (ASIALILSLAIFCVMVTCVFF) traverse the membrane as a helical segment. At 190-422 (YRYCSTIRNS…HFASAHSLPD (233 aa)) the chain is on the cytoplasmic side. The RING-type; atypical zinc finger occupies 232–274 (CAICLEDYIVGDKLRVLPCSHKFHVACVDSWLISWRTFCPVCK). Residues 344-368 (LRRQASPLQSSSQRSHLSMKSSHSL) are disordered. Residues 349–368 (SPLQSSSQRSHLSMKSSHSL) are compositionally biased toward polar residues.

The protein localises to the prevacuolar compartment membrane. It is found in the protein storage vacuole membrane. Its function is as follows. Involved in the trafficking of vacuolar proteins. May function as a sorting receptor for protein trafficking to the protein storage vacuole (PSV). The polypeptide is Receptor homology region, transmembrane domain- and RING domain-containing protein 3 (RMR3) (Arabidopsis thaliana (Mouse-ear cress)).